Consider the following 1013-residue polypeptide: Tolloid-like protein 1 (1013 aa).

The signal sequence occupies residues 1–30 (MGLQALSPRMLLWLVVSGIVFSRVLWVCAG). Positions 31–147 (LDYDYTFDGN…EQSEKNRVPR (117 aa)) are excised as a propeptide. Residues 124–150 (QNNTMKGKAPPKLSEQSEKNRVPRAAT) are disordered. Residues 148–347 (AATSRTERIW…AQARKLYRCP (200 aa)) form the Peptidase M12A domain. A glycan (N-linked (GlcNAc...) asparagine) is linked at N169. Intrachain disulfides connect C190–C346, C210–C232, C212–C213, and C349–C375. H240 contacts Zn(2+). E241 is an active-site residue. Positions 244 and 250 each coordinate Zn(2+). 2 CUB domains span residues 349-461 (CGET…YEAI) and 462-574 (CGGE…FFKE). 2 N-linked (GlcNAc...) asparagine glycosylation sites follow: N359 and N390. Cystine bridges form between C402-C424, C462-C488, C515-C537, C578-C590, C586-C599, C601-C614, C618-C644, C671-C693, C734-C745, C741-C754, C756-C769, C774-C800, C827-C849, C887-C917, and C944-C966. An EGF-like 1; calcium-binding domain is found at 574–615 (EEDECAKPDRGGCEQRCLNTLGSYQCACEPGYELGPDRRSCE). The region spanning 618–730 (CGGLLTKLNG…KGFKAHFFSD (113 aa)) is the CUB 3 domain. Residue N626 is glycosylated (N-linked (GlcNAc...) asparagine). An EGF-like 2; calcium-binding domain is found at 730 to 770 (DKDECSKDNGGCQHECVNTMGSYTCQCRNGFVLHENKHDCK). 2 CUB domains span residues 774-886 (CEQK…HSTE) and 887-1003 (CGGR…YKSI).

Requires Zn(2+) as cofactor. Highly expressed in brain and kidney and weakly in lung, skeletal muscle. A perceptible level of expression is observed in heart and testis.

It is found in the secreted. In terms of biological role, protease which processes procollagen C-propeptides, such as chordin, pro-biglycan and pro-lysyl oxidase. Required for the embryonic development, especially heart development. Predominant protease, which in the development, influences dorsal-ventral patterning and skeletogenesis. The chain is Tolloid-like protein 1 (Tll1) from Mus musculus (Mouse).